Reading from the N-terminus, the 318-residue chain is MSVWAIGDLQGCYDITQRLLEKINFDPAQDTLWFCGDLVNRGGQSLETLRLVHSLRAHSVVVLGNHDLSLLAIGARSEEEQRKVNPDLLRIVLAEDRDALLDWLRMQKLAHVDRALGWMMIHAGLAPKWTTQMAEKHAREVEQQLQGGGYRKLLRNMYGDQPGWSPGLIGYDRSRAIINLFTRMRYCTPRGRIATDDKGTPGTQAQGLYPWFEVPGRVERDLKIVCGHWSALGLTITQGVHAIDTGAVWGGKLTALQLDTDELRVVQVPGREVTGPAPVARAPRRPRERLGRQRSRGNRGNAGNTAVPAKPQVDTPQD.

The interval 269 to 318 (PGREVTGPAPVARAPRRPRERLGRQRSRGNRGNAGNTAVPAKPQVDTPQD) is disordered. Residues 282-297 (APRRPRERLGRQRSRG) show a composition bias toward basic residues.

It belongs to the Ap4A hydrolase family.

It catalyses the reaction P(1),P(4)-bis(5'-adenosyl) tetraphosphate + H2O = 2 ADP + 2 H(+). Functionally, hydrolyzes diadenosine 5',5'''-P1,P4-tetraphosphate to yield ADP. The polypeptide is Bis(5'-nucleosyl)-tetraphosphatase, symmetrical (Xanthomonas oryzae pv. oryzae (strain KACC10331 / KXO85)).